Reading from the N-terminus, the 303-residue chain is 2-dehydropantoate 2-reductase (303 aa).

Residues 7–12, asparagine 98, and alanine 122 each bind NADP(+); that span reads GCGALG. Position 98 (asparagine 98) interacts with substrate. The active-site Proton donor is lysine 176. Positions 180, 184, 194, and 244 each coordinate substrate. Position 256 (glutamate 256) interacts with NADP(+).

Belongs to the ketopantoate reductase family. In terms of assembly, monomer.

It localises to the cytoplasm. The catalysed reaction is (R)-pantoate + NADP(+) = 2-dehydropantoate + NADPH + H(+). It functions in the pathway cofactor biosynthesis; (R)-pantothenate biosynthesis; (R)-pantoate from 3-methyl-2-oxobutanoate: step 2/2. Catalyzes the NADPH-dependent reduction of ketopantoate into pantoic acid. This Escherichia coli O157:H7 protein is 2-dehydropantoate 2-reductase (panE).